A 57-amino-acid chain; its full sequence is UPF0391 membrane protein RHECIAT_CH0003936 (57 aa).

2 helical membrane-spanning segments follow: residues 4–24 (WALI…SGVS) and 33–53 (VLFG…LMAG).

The protein belongs to the UPF0391 family.

The protein localises to the cell membrane. This is UPF0391 membrane protein RHECIAT_CH0003936 from Rhizobium etli (strain CIAT 652).